Consider the following 297-residue polypeptide: Homoserine kinase (297 aa).

82–92 (PLTRGLGSSAS) lines the ATP pocket.

The protein belongs to the GHMP kinase family. Homoserine kinase subfamily.

It is found in the cytoplasm. The enzyme catalyses L-homoserine + ATP = O-phospho-L-homoserine + ADP + H(+). It participates in amino-acid biosynthesis; L-threonine biosynthesis; L-threonine from L-aspartate: step 4/5. Catalyzes the ATP-dependent phosphorylation of L-homoserine to L-homoserine phosphate. This Bacillus cereus (strain ZK / E33L) protein is Homoserine kinase.